The chain runs to 420 residues: Small ribosomal subunit protein mS75 (420 aa).

The transit peptide at 1–11 directs the protein to the mitochondrion; that stretch reads MYNLSRIIYRF. Disordered stretches follow at residues 99–120 and 390–420; these read RQKNAANPSSDNTPSDSGDVMS and RYSPANQKRRSKRKQKRKERRIACLKAGKQT. The segment covering 102 to 114 has biased composition (polar residues); sequence NAANPSSDNTPSD. Residues 396-409 are compositionally biased toward basic residues; that stretch reads QKRRSKRKQKRKER.

As to quaternary structure, component of the mitochondrial ribosome small subunit. Expressed at high levels in reproductive organs and, at lower levels, ubiquitously.

Its subcellular location is the mitochondrion. Functionally, essential for fertility (male and female gametophyte functions and development). Required for the integrity of female gametic mitochondria. Modulates male gametophyte functions, including pollen tube growth and style penetration. Involved in mitochondrial-driven cell-to-cell communication in embryo sacs during female gametes maturation (including embryogenesis initiation and endosperm development), especially for reciprocal signaling between central and egg cells which regulates reciprocal development. The polypeptide is Small ribosomal subunit protein mS75 (Arabidopsis thaliana (Mouse-ear cress)).